Consider the following 320-residue polypeptide: Ferrochelatase (320 aa).

Residues His-194 and Glu-275 each coordinate Fe cation.

The protein belongs to the ferrochelatase family.

Its subcellular location is the cytoplasm. The enzyme catalyses heme b + 2 H(+) = protoporphyrin IX + Fe(2+). It functions in the pathway porphyrin-containing compound metabolism; protoheme biosynthesis; protoheme from protoporphyrin-IX: step 1/1. Functionally, catalyzes the ferrous insertion into protoporphyrin IX. In Vibrio cholerae serotype O1 (strain ATCC 39315 / El Tor Inaba N16961), this protein is Ferrochelatase.